The sequence spans 1254 residues: Receptor tyrosine-protein kinase erbB-2 (1254 aa).

An N-terminal signal peptide occupies residues 1–22; that stretch reads MELAAWCGWGLLLALLSPGASG. The Extracellular segment spans residues 23-652; it reads TQVCTGTDMK…PAEQRASPAT (630 aa). Cys-26 and Cys-53 are joined by a disulfide. Asn-68, Asn-125, and Asn-187 each carry an N-linked (GlcNAc...) asparagine glycan. Cystine bridges form between Cys-162/Cys-192, Cys-195/Cys-204, Cys-199/Cys-212, Cys-236/Cys-244, Cys-240/Cys-252, Cys-255/Cys-264, Cys-268/Cys-295, Cys-299/Cys-311, Cys-315/Cys-331, Cys-334/Cys-338, Cys-342/Cys-367, Cys-475/Cys-504, Cys-511/Cys-520, and Cys-515/Cys-528. N-linked (GlcNAc...) asparagine glycosylation occurs at Asn-259. N-linked (GlcNAc...) asparagine glycosylation occurs at Asn-530. Disulfide bonds link Cys-531/Cys-540, Cys-544/Cys-560, Cys-563/Cys-576, Cys-567/Cys-584, Cys-587/Cys-596, Cys-600/Cys-623, Cys-626/Cys-634, and Cys-630/Cys-642. N-linked (GlcNAc...) asparagine glycosylation is present at Asn-571. An N-linked (GlcNAc...) asparagine glycan is attached at Asn-629. A helical membrane pass occupies residues 653-675; sequence SIIATVVGILLFLVIGVVVGILI. The segment at 676-689 is required for interaction with KPNB1 and EEA1; sequence KRRRQKIRKYTMRR. The Nuclear localization signal signature appears at 676-689; the sequence is KRRRQKIRKYTMRR. Residues 676-1254 lie on the Cytoplasmic side of the membrane; that stretch reads KRRRQKIRKY…PEYLGLDVPV (579 aa). In terms of domain architecture, Protein kinase spans 720-987; sequence LRKVKVLGSG…RMARDPQRFV (268 aa). ATP-binding positions include 726–734 and Lys-753; that span reads LGSGAFGTV. Residue Asp-845 is the Proton acceptor of the active site. Tyr-877 carries the phosphotyrosine modification. Disordered regions lie at residues 1029-1116 and 1133-1179; these read GFFF…SEDP and CSPQ…GKNG. Phosphoserine occurs at positions 1054, 1078, 1083, and 1107. A Phosphotyrosine modification is found at Tyr-1112. A Phosphotyrosine; by autocatalysis modification is found at Tyr-1139. Positions 1146–1161 are enriched in pro residues; the sequence is RPQPPLTPEGPLPPVR. Residue Thr-1166 is modified to Phosphothreonine. The interval 1195 to 1197 is interaction with PIK3C2B; it reads EYL. Phosphotyrosine is present on Tyr-1196. A disordered region spans residues 1223–1254; sequence DQDPSERGSPPNTFEGTPTAENPEYLGLDVPV. A compositionally biased stretch (polar residues) spans 1232–1242; the sequence is PPNTFEGTPTA. Tyr-1247 bears the Phosphotyrosine; by autocatalysis mark.

It belongs to the protein kinase superfamily. Tyr protein kinase family. EGF receptor subfamily. Homodimer. Heterodimer with EGFR, ERBB3 and ERBB4. Part of a complex with EGFR and either PIK3C2A or PIK3C2B. May interact with PIK3C2B when phosphorylated on Tyr-1196. Interacts with PRKCABP and PLXNB1. Interacts (when phosphorylated on Tyr-1247) with MEMO. Interacts with MUC1. Interacts (when phosphorylated on Tyr-1139) with GRB7 (via SH2 domain). Interacts (when phosphorylated on Tyr-1247) with ERBIN. Interacts with SRC, KPNB1, RANBP2, EEA1, CRM1, CLTC, PTK6, RPA194, MYOC and ACTB. Interacts (preferentially with the tyrosine phosphorylated form) with CPNE3; this interaction occurs at the cell membrane and is increased in a growth factor heregulin-dependent manner. Interacts with HSP90AA1 and HSP90AB1 in an ATP-dependent manner; the interaction suppresses ERBB2 kinase activity. Interacts with SORL1; this interaction regulates ERBB2 subcellular distribution by promoting its recycling after internalization from endosomes back to the plasma membrane, hence stimulates ERBB2-mediated signaling. Interacts with SH3BGRL. Interacts with ROR1. In terms of processing, autophosphorylated. Autophosphorylation occurs in trans, i.e. one subunit of the dimeric receptor phosphorylates tyrosine residues on the other subunit. Ligand-binding increases phosphorylation on tyrosine residues. Signaling via SEMA4C promotes phosphorylation at Tyr-1247. Dephosphorylated by PTPN12.

It is found in the cell membrane. The protein resides in the cell projection. Its subcellular location is the ruffle membrane. It localises to the early endosome. The protein localises to the cytoplasm. It is found in the perinuclear region. The protein resides in the nucleus. It carries out the reaction L-tyrosyl-[protein] + ATP = O-phospho-L-tyrosyl-[protein] + ADP + H(+). Its function is as follows. Protein tyrosine kinase that is part of several cell surface receptor complexes, but that apparently needs a coreceptor for ligand binding. Essential component of a neuregulin-receptor complex, although neuregulins do not interact with it alone. GP30 is a potential ligand for this receptor. Regulates outgrowth and stabilization of peripheral microtubules (MTs). Upon ERBB2 activation, the MEMO1-RHOA-DIAPH1 signaling pathway elicits the phosphorylation and thus the inhibition of GSK3B at cell membrane. This prevents the phosphorylation of APC and CLASP2, allowing its association with the cell membrane. In turn, membrane-bound APC allows the localization of MACF1 to the cell membrane, which is required for microtubule capture and stabilization. In terms of biological role, in the nucleus is involved in transcriptional regulation. Associates with the 5'-TCAAATTC-3' sequence in the PTGS2/COX-2 promoter and activates its transcription. Implicated in transcriptional activation of CDKN1A; the function involves STAT3 and SRC. Involved in the transcription of rRNA genes by RNA Pol I and enhances protein synthesis and cell growth. The protein is Receptor tyrosine-protein kinase erbB-2 (ERBB2) of Mesocricetus auratus (Golden hamster).